A 123-amino-acid chain; its full sequence is Large ribosomal subunit protein bL17 (123 aa).

Belongs to the bacterial ribosomal protein bL17 family. Part of the 50S ribosomal subunit. Contacts protein L32.

The sequence is that of Large ribosomal subunit protein bL17 from Dichelobacter nodosus (strain VCS1703A).